Here is a 440-residue protein sequence, read N- to C-terminus: Methylthioribose-1-phosphate isomerase (440 aa).

The active-site Proton donor is aspartate 285.

It belongs to the eIF-2B alpha/beta/delta subunits family. MtnA subfamily.

Its subcellular location is the cytoplasm. It localises to the nucleus. It carries out the reaction 5-(methylsulfanyl)-alpha-D-ribose 1-phosphate = 5-(methylsulfanyl)-D-ribulose 1-phosphate. The protein operates within amino-acid biosynthesis; L-methionine biosynthesis via salvage pathway; L-methionine from S-methyl-5-thio-alpha-D-ribose 1-phosphate: step 1/6. Catalyzes the interconversion of methylthioribose-1-phosphate (MTR-1-P) into methylthioribulose-1-phosphate (MTRu-1-P). The chain is Methylthioribose-1-phosphate isomerase (mri1) from Botryotinia fuckeliana (strain B05.10) (Noble rot fungus).